Here is a 199-residue protein sequence, read N- to C-terminus: Nucleoid occlusion factor SlmA (199 aa).

The 61-residue stretch at 11–71 (ERRQQVLTVL…ALIDNLEAHL (61 aa)) folds into the HTH tetR-type domain. The segment at residues 34 to 53 (TTARIAAEVGVSEAALYRYY) is a DNA-binding region (H-T-H motif).

This sequence belongs to the nucleoid occlusion factor SlmA family. Homodimer. Interacts with FtsZ.

It localises to the cytoplasm. The protein resides in the nucleoid. Required for nucleoid occlusion (NO) phenomenon, which prevents Z-ring formation and cell division over the nucleoid. Acts as a DNA-associated cell division inhibitor that binds simultaneously chromosomal DNA and FtsZ, and disrupts the assembly of FtsZ polymers. SlmA-DNA-binding sequences (SBS) are dispersed on non-Ter regions of the chromosome, preventing FtsZ polymerization at these regions. The polypeptide is Nucleoid occlusion factor SlmA (Pasteurella multocida (strain Pm70)).